Consider the following 433-residue polypeptide: Probable mannose-6-phosphate isomerase (433 aa).

Zn(2+)-binding residues include Gln103, His105, Glu130, and His277. The active site involves Arg296.

This sequence belongs to the mannose-6-phosphate isomerase type 1 family. Zn(2+) serves as cofactor.

The protein resides in the cytoplasm. It catalyses the reaction D-mannose 6-phosphate = D-fructose 6-phosphate. It functions in the pathway nucleotide-sugar biosynthesis; GDP-alpha-D-mannose biosynthesis; alpha-D-mannose 1-phosphate from D-fructose 6-phosphate: step 1/2. Functionally, involved in the synthesis of the GDP-mannose and dolichol-phosphate-mannose required for a number of critical mannosyl transfer reactions. The chain is Probable mannose-6-phosphate isomerase (PMIH) from Echinococcus multilocularis (Fox tapeworm).